The primary structure comprises 147 residues: Large ribosomal subunit protein bL9 (147 aa).

This sequence belongs to the bacterial ribosomal protein bL9 family.

Its function is as follows. Binds to the 23S rRNA. In Phocaeicola vulgatus (strain ATCC 8482 / DSM 1447 / JCM 5826 / CCUG 4940 / NBRC 14291 / NCTC 11154) (Bacteroides vulgatus), this protein is Large ribosomal subunit protein bL9.